Here is a 429-residue protein sequence, read N- to C-terminus: Phosphomethylpyrimidine synthase 1 (429 aa).

Residues Asn-65, Met-94, Tyr-123, His-162, 184-186 (SRG), 225-228 (DGLR), and Glu-264 contribute to the substrate site. His-268 contacts Zn(2+). Tyr-291 contacts substrate. His-332 is a binding site for Zn(2+). Cys-408, Cys-411, and Cys-415 together coordinate [4Fe-4S] cluster.

Belongs to the ThiC family. [4Fe-4S] cluster serves as cofactor.

The enzyme catalyses 5-amino-1-(5-phospho-beta-D-ribosyl)imidazole + S-adenosyl-L-methionine = 4-amino-2-methyl-5-(phosphooxymethyl)pyrimidine + CO + 5'-deoxyadenosine + formate + L-methionine + 3 H(+). It functions in the pathway cofactor biosynthesis; thiamine diphosphate biosynthesis. Functionally, catalyzes the synthesis of the hydroxymethylpyrimidine phosphate (HMP-P) moiety of thiamine from aminoimidazole ribotide (AIR) in a radical S-adenosyl-L-methionine (SAM)-dependent reaction. In Methanosphaera stadtmanae (strain ATCC 43021 / DSM 3091 / JCM 11832 / MCB-3), this protein is Phosphomethylpyrimidine synthase 1.